A 122-amino-acid chain; its full sequence is Large ribosomal subunit protein uL14 (122 aa).

Belongs to the universal ribosomal protein uL14 family. In terms of assembly, part of the 50S ribosomal subunit. Forms a cluster with proteins L3 and L19. In the 70S ribosome, L14 and L19 interact and together make contacts with the 16S rRNA in bridges B5 and B8.

Its function is as follows. Binds to 23S rRNA. Forms part of two intersubunit bridges in the 70S ribosome. In Rhodopseudomonas palustris (strain HaA2), this protein is Large ribosomal subunit protein uL14.